We begin with the raw amino-acid sequence, 310 residues long: Ribosomal protein uL3 glutamine methyltransferase (310 aa).

It belongs to the protein N5-glutamine methyltransferase family. PrmB subfamily.

The enzyme catalyses L-glutaminyl-[ribosomal protein uL3] + S-adenosyl-L-methionine = N(5)-methyl-L-glutaminyl-[ribosomal protein uL3] + S-adenosyl-L-homocysteine + H(+). Its function is as follows. Methylates large ribosomal subunit protein uL3 on a specific glutamine residue. In Aliivibrio fischeri (strain ATCC 700601 / ES114) (Vibrio fischeri), this protein is Ribosomal protein uL3 glutamine methyltransferase.